The following is an 88-amino-acid chain: Small ribosomal subunit protein uS15 (88 aa).

This sequence belongs to the universal ribosomal protein uS15 family. Part of the 30S ribosomal subunit. Forms a bridge to the 50S subunit in the 70S ribosome, contacting the 23S rRNA.

One of the primary rRNA binding proteins, it binds directly to 16S rRNA where it helps nucleate assembly of the platform of the 30S subunit by binding and bridging several RNA helices of the 16S rRNA. In terms of biological role, forms an intersubunit bridge (bridge B4) with the 23S rRNA of the 50S subunit in the ribosome. This Geobacter sulfurreducens (strain ATCC 51573 / DSM 12127 / PCA) protein is Small ribosomal subunit protein uS15.